Here is a 135-residue protein sequence, read N- to C-terminus: Large ribosomal subunit protein uL16c (135 aa).

The segment at methionine 1–lysine 20 is disordered.

It belongs to the universal ribosomal protein uL16 family. Part of the 50S ribosomal subunit.

Its subcellular location is the plastid. The protein resides in the chloroplast. The sequence is that of Large ribosomal subunit protein uL16c from Landoltia punctata (Dotted duckmeat).